Consider the following 82-residue polypeptide: Myosin light chain alkali (82 aa).

The EF-hand domain maps to 7-42 (GCYEDFIECLKLYDKEENGTMMLAELQHALLALGES).

In terms of assembly, myosin is a hexamer of 2 heavy chains and 4 light chains.

The polypeptide is Myosin light chain alkali (Mlc1) (Drosophila mauritiana (Fruit fly)).